Reading from the N-terminus, the 528-residue chain is Endoglucanase 24 (528 aa).

Residues 1-24 (MGSKTKGCCGWLIVALVASLVATA) form the signal peptide. Catalysis depends on Asp-109, which acts as the Nucleophile. Residue Asn-259 is glycosylated (N-linked (GlcNAc...) asparagine). Residue His-446 is part of the active site. N-linked (GlcNAc...) asparagine glycosylation is present at Asn-487. Residues Asp-492 and Glu-501 contribute to the active site.

This sequence belongs to the glycosyl hydrolase 9 (cellulase E) family.

It localises to the secreted. The enzyme catalyses Endohydrolysis of (1-&gt;4)-beta-D-glucosidic linkages in cellulose, lichenin and cereal beta-D-glucans.. The sequence is that of Endoglucanase 24 from Oryza sativa subsp. japonica (Rice).